We begin with the raw amino-acid sequence, 194 residues long: ATP-dependent Clp protease proteolytic subunit (194 aa).

Ser-98 serves as the catalytic Nucleophile. The active site involves His-123.

This sequence belongs to the peptidase S14 family. In terms of assembly, fourteen ClpP subunits assemble into 2 heptameric rings which stack back to back to give a disk-like structure with a central cavity, resembling the structure of eukaryotic proteasomes.

It is found in the cytoplasm. The catalysed reaction is Hydrolysis of proteins to small peptides in the presence of ATP and magnesium. alpha-casein is the usual test substrate. In the absence of ATP, only oligopeptides shorter than five residues are hydrolyzed (such as succinyl-Leu-Tyr-|-NHMec, and Leu-Tyr-Leu-|-Tyr-Trp, in which cleavage of the -Tyr-|-Leu- and -Tyr-|-Trp bonds also occurs).. In terms of biological role, cleaves peptides in various proteins in a process that requires ATP hydrolysis. Has a chymotrypsin-like activity. Plays a major role in the degradation of misfolded proteins. The polypeptide is ATP-dependent Clp protease proteolytic subunit (Staphylococcus epidermidis (strain ATCC 35984 / DSM 28319 / BCRC 17069 / CCUG 31568 / BM 3577 / RP62A)).